A 345-amino-acid polypeptide reads, in one-letter code: Phosphoribosylformylglycinamidine cyclo-ligase (345 aa).

The protein belongs to the AIR synthase family.

It is found in the cytoplasm. It catalyses the reaction 2-formamido-N(1)-(5-O-phospho-beta-D-ribosyl)acetamidine + ATP = 5-amino-1-(5-phospho-beta-D-ribosyl)imidazole + ADP + phosphate + H(+). The protein operates within purine metabolism; IMP biosynthesis via de novo pathway; 5-amino-1-(5-phospho-D-ribosyl)imidazole from N(2)-formyl-N(1)-(5-phospho-D-ribosyl)glycinamide: step 2/2. The polypeptide is Phosphoribosylformylglycinamidine cyclo-ligase (Chromobacterium violaceum (strain ATCC 12472 / DSM 30191 / JCM 1249 / CCUG 213 / NBRC 12614 / NCIMB 9131 / NCTC 9757 / MK)).